The sequence spans 357 residues: 3'(2'),5'-bisphosphate nucleotidase (357 aa).

Asp-49 serves as the catalytic Proton acceptor. Positions 72, 142, 144, and 145 each coordinate Mg(2+). Catalysis depends on Thr-147, which acts as the Proton acceptor. Residues Thr-147, His-241, Ser-264, Lys-267, Arg-281, and Asp-294 each coordinate adenosine 3',5'-bisphosphate. 5 residues coordinate AMP: His-241, Ser-264, Lys-267, Arg-281, and Asp-294. Asp-294 contributes to the Mg(2+) binding site.

It belongs to the inositol monophosphatase superfamily. Mg(2+) serves as cofactor.

It is found in the cytoplasm. The protein resides in the nucleus. The enzyme catalyses 3'-phosphoadenylyl sulfate + H2O = adenosine 5'-phosphosulfate + phosphate. It carries out the reaction adenosine 3',5'-bisphosphate + H2O = AMP + phosphate. It catalyses the reaction adenosine 2',5'-bisphosphate + H2O = AMP + phosphate. With respect to regulation, phosphatase activity is very sensitive to lithium and moderately sensitive to sodium. The inhibitory effects of lithium and sodium are overcome by high concentrations of potassium. Lithium exerts its inhibitory action by blocking the products of the PAP hydrolysis at the active site. Its function is as follows. Phosphatase that converts adenosine 3'-phosphate 5'-phosphosulfate (PAPS) to adenosine 5'-phosphosulfate (APS) and 3'(2')-phosphoadenosine 5'-phosphate (PAP) to AMP. May regulate the flux of sulfur in the sulfur-activation pathway by converting PAPS to APS. Involved in salt tolerance. Confers resistance to lithium. Shows no activity on inositol mono- and diphosphates, 3'-AMP, AMP, nicotinamide adenine dinucleotide phosphate (NADP), and p-nitrophenylphosphate. In Saccharomyces cerevisiae (strain ATCC 204508 / S288c) (Baker's yeast), this protein is 3'(2'),5'-bisphosphate nucleotidase (MET22).